Consider the following 130-residue polypeptide: Small ribosomal subunit protein uS8 (130 aa).

Belongs to the universal ribosomal protein uS8 family. As to quaternary structure, part of the 30S ribosomal subunit.

Its function is as follows. One of the primary rRNA binding proteins, it binds directly to 16S rRNA central domain where it helps coordinate assembly of the platform of the 30S subunit. This is Small ribosomal subunit protein uS8 from Methanococcoides burtonii (strain DSM 6242 / NBRC 107633 / OCM 468 / ACE-M).